The primary structure comprises 1479 residues: Putative receptor-type tyrosine-protein phosphatase mosPTP-1 (1479 aa).

The signal sequence occupies residues 1–28 (MKPRLLTTVTTWLALVLPVVYLSRPCQA). Residues 29 to 365 (LPTVNFTANY…RQSYNDYNLA (337 aa)) are Extracellular-facing. N-linked (GlcNAc...) asparagine glycans are attached at residues asparagine 33, asparagine 40, asparagine 146, asparagine 182, asparagine 248, asparagine 294, and asparagine 306. Fibronectin type-III domains lie at 143–242 (KPLN…AGPS) and 243–346 (APKV…VQLN). A helical transmembrane segment spans residues 366-386 (VMIGILICCFGLLFIVLTILL). At 387 to 1479 (WKKCFHAAYY…AKLRAVVRVE (1093 aa)) the chain is on the cytoplasmic side. 2 Tyrosine-protein phosphatase domains span residues 452-717 (FSKE…LVEA) and 740-992 (IDSQ…LSYM). The active-site Phosphocysteine intermediate is cysteine 658.

Belongs to the protein-tyrosine phosphatase family. Receptor class subfamily. As to quaternary structure, interacts with C-type lectin mosGCTL-1. Interacts with C-type lectin mosGCTL-7.

It is found in the cell membrane. It catalyses the reaction O-phospho-L-tyrosyl-[protein] + H2O = L-tyrosyl-[protein] + phosphate. Its function is as follows. Putative protein tyrosine-protein phosphatase. Functionally, (Microbial infection) Facilitates West Nile virus infection in mosquitoes. The protein is Putative receptor-type tyrosine-protein phosphatase mosPTP-1 of Culex quinquefasciatus (Southern house mosquito).